A 353-amino-acid chain; its full sequence is S-adenosylmethionine:tRNA ribosyltransferase-isomerase (353 aa).

This sequence belongs to the QueA family. In terms of assembly, monomer.

The protein localises to the cytoplasm. It carries out the reaction 7-aminomethyl-7-carbaguanosine(34) in tRNA + S-adenosyl-L-methionine = epoxyqueuosine(34) in tRNA + adenine + L-methionine + 2 H(+). It participates in tRNA modification; tRNA-queuosine biosynthesis. Transfers and isomerizes the ribose moiety from AdoMet to the 7-aminomethyl group of 7-deazaguanine (preQ1-tRNA) to give epoxyqueuosine (oQ-tRNA). This Cupriavidus metallidurans (strain ATCC 43123 / DSM 2839 / NBRC 102507 / CH34) (Ralstonia metallidurans) protein is S-adenosylmethionine:tRNA ribosyltransferase-isomerase.